Consider the following 377-residue polypeptide: Guanine nucleotide exchange factor for Rab-3A (377 aa).

The segment at 23-57 is disordered; sequence WKNLGPSKGNRKSPGGLVEASASWEEAGGEEHPAA. A coiled-coil region spans residues 77 to 128; sequence SEFLKEELYKAQKELKLKDEECERLCKVRAQLEQELEELTASLFEEAHKMVR. The interval 167-198 is disordered; it reads PASPNRELHPQLLSPTKAGPRKGHSRQKSTSS. S169 and S180 each carry phosphoserine.

Belongs to the SEC2 family. As to quaternary structure, interacts with RAB3A and IHPK1 through the coiled-coil domain. This interaction is competitive. IHPK1 kinase activity is not required for this interaction. As to expression, selectively localized to the brain (at protein level).

Functionally, guanine nucleotide exchange factor (GEF) which may activate RAB3A, a GTPase that regulates synaptic vesicle exocytosis. Promotes the exchange of GDP to GTP, converting inactive GDP-bound Rab proteins into their active GTP-bound form. May also activate RAB8A and RAB8B. The polypeptide is Guanine nucleotide exchange factor for Rab-3A (Rab3il1) (Rattus norvegicus (Rat)).